Reading from the N-terminus, the 228-residue chain is Phosphoglycolate phosphatase (228 aa).

Asp9 acts as the Nucleophile in catalysis. The Mg(2+) site is built by Asp9 and Asp11. Position 151 (Lys151) interacts with substrate. Positions 174 and 178 each coordinate Mg(2+).

It belongs to the archaeal SPP-like hydrolase family. It depends on Mg(2+) as a cofactor.

The enzyme catalyses 2-phosphoglycolate + H2O = glycolate + phosphate. Catalyzes the dephosphorylation of 2-phosphoglycolate. The protein is Phosphoglycolate phosphatase of Pyrobaculum neutrophilum (strain DSM 2338 / JCM 9278 / NBRC 100436 / V24Sta) (Thermoproteus neutrophilus).